Here is a 501-residue protein sequence, read N- to C-terminus: Aldehyde dehydrogenase 1A1 (501 aa).

Ser2 is modified (N-acetylserine). Lys91 and Lys128 each carry N6-acetyllysine. Residues 167-170, 193-196, 226-227, and 246-247 contribute to the NAD(+) site; these read IPWN, KPAE, GP, and GS. N6-acetyllysine is present on Lys252. Glu269 functions as the Proton acceptor in the catalytic mechanism. 269–271 is an NAD(+) binding site; sequence ELG. Cys303 acts as the Nucleophile in catalysis. The tract at residues 336–501 is mediates interaction with PRMT3; sequence LNSGINQGPQ…VAIKISQKNS (166 aa). 349–353 lines the NAD(+) pocket; it reads EQHDK. Residues Lys353 and Lys367 each carry the N6-acetyllysine modification. 400–402 is an NAD(+) binding site; sequence EIF. Lys410 is modified (N6-acetyllysine). Ser413 carries the post-translational modification Phosphoserine. N6-acetyllysine is present on residues Lys419, Lys435, and Lys495.

Belongs to the aldehyde dehydrogenase family. Homotetramer. Interacts with PRMT3; the interaction is direct, inhibits ALDH1A1 aldehyde dehydrogenase activity and is independent of the methyltransferase activity of PRMT3. In terms of processing, the N-terminus is blocked most probably by acetylation.

It is found in the cytoplasm. The protein resides in the cytosol. The protein localises to the cell projection. It localises to the axon. It catalyses the reaction an aldehyde + NAD(+) + H2O = a carboxylate + NADH + 2 H(+). The catalysed reaction is all-trans-retinal + NAD(+) + H2O = all-trans-retinoate + NADH + 2 H(+). The enzyme catalyses 9-cis-retinal + NAD(+) + H2O = 9-cis-retinoate + NADH + 2 H(+). It carries out the reaction 11-cis-retinal + NAD(+) + H2O = 11-cis-retinoate + NADH + 2 H(+). It catalyses the reaction 13-cis-retinal + NAD(+) + H2O = 13-cis-retinoate + NADH + 2 H(+). The catalysed reaction is 3-deoxyglucosone + NAD(+) + H2O = 2-dehydro-3-deoxy-D-gluconate + NADH + 2 H(+). The enzyme catalyses (E)-4-hydroxynon-2-enal + NAD(+) + H2O = (E)-4-hydroxynon-2-enoate + NADH + 2 H(+). It carries out the reaction malonaldehyde + NAD(+) + H2O = 3-oxopropanoate + NADH + 2 H(+). It catalyses the reaction hexanal + NAD(+) + H2O = hexanoate + NADH + 2 H(+). The catalysed reaction is propanal + NAD(+) + H2O = propanoate + NADH + 2 H(+). The enzyme catalyses acetaldehyde + NAD(+) + H2O = acetate + NADH + 2 H(+). It carries out the reaction benzaldehyde + NAD(+) + H2O = benzoate + NADH + 2 H(+). It catalyses the reaction 4-aminobutanal + NAD(+) + H2O = 4-aminobutanoate + NADH + 2 H(+). It functions in the pathway cofactor metabolism; retinol metabolism. In terms of biological role, cytosolic dehydrogenase that catalyzes the irreversible oxidation of a wide range of aldehydes to their corresponding carboxylic acid. Functions downstream of retinol dehydrogenases and catalyzes the oxidation of retinaldehyde into retinoic acid, the second step in the oxidation of retinol/vitamin A into retinoic acid. This pathway is crucial to control the levels of retinol and retinoic acid, two important molecules which excess can be teratogenic and cytotoxic. Also oxidizes aldehydes resulting from lipid peroxidation like (E)-4-hydroxynon-2-enal/HNE, malonaldehyde and hexanal that form protein adducts and are highly cytotoxic. By participating for instance to the clearance of (E)-4-hydroxynon-2-enal/HNE in the lens epithelium prevents the formation of HNE-protein adducts and lens opacification. Also functions downstream of fructosamine-3-kinase in the fructosamine degradation pathway by catalyzing the oxidation of 3-deoxyglucosone, the carbohydrate product of fructosamine 3-phosphate decomposition, which is itself a potent glycating agent that may react with lysine and arginine side-chains of proteins. Also has an aminobutyraldehyde dehydrogenase activity and is probably part of an alternative pathway for the biosynthesis of GABA/4-aminobutanoate in midbrain, thereby playing a role in GABAergic synaptic transmission. This chain is Aldehyde dehydrogenase 1A1, found in Mesocricetus auratus (Golden hamster).